We begin with the raw amino-acid sequence, 392 residues long: GDSL esterase/lipase ESM1 (392 aa).

An N-terminal signal peptide occupies residues 1–28; that stretch reads MADNLNLVSVLGVLLVLTIFHNPIIVYA. Catalysis depends on S43, which acts as the Nucleophile. N-linked (GlcNAc...) asparagine glycosylation is found at N146, N166, and N290. Active-site residues include D324 and H327.

Belongs to the 'GDSL' lipolytic enzyme family.

It is found in the secreted. Its function is as follows. Represses or inhibits nitriles production from methionine-derived and from indol-3-ylmethyl glucosinolates. Favors isothiocyanate production. The polypeptide is GDSL esterase/lipase ESM1 (ESM1) (Arabidopsis thaliana (Mouse-ear cress)).